A 232-amino-acid polypeptide reads, in one-letter code: Nucleolar protein 16 (232 aa).

Positions 1–14 (MGRELQKRKKRSSR) are enriched in basic residues. 2 disordered regions span residues 1-20 (MGRE…VQTH) and 113-161 (RSDN…QSSR). The span at 132–154 (EEPKPKNPTHDIEWHGISDDRQE) shows a compositional bias: basic and acidic residues.

Belongs to the NOP16 family. In terms of assembly, component of the pre-66S ribosomal particle.

The protein localises to the nucleus. It is found in the nucleolus. In terms of biological role, involved in the biogenesis of the 60S ribosomal subunit. The sequence is that of Nucleolar protein 16 (nop-16) from Neurospora crassa (strain ATCC 24698 / 74-OR23-1A / CBS 708.71 / DSM 1257 / FGSC 987).